The primary structure comprises 469 residues: tRNA(Ile)-lysidine synthase (469 aa).

Residue 26 to 31 (SGGPDS) coordinates ATP.

This sequence belongs to the tRNA(Ile)-lysidine synthase family.

The protein resides in the cytoplasm. The catalysed reaction is cytidine(34) in tRNA(Ile2) + L-lysine + ATP = lysidine(34) in tRNA(Ile2) + AMP + diphosphate + H(+). Functionally, ligates lysine onto the cytidine present at position 34 of the AUA codon-specific tRNA(Ile) that contains the anticodon CAU, in an ATP-dependent manner. Cytidine is converted to lysidine, thus changing the amino acid specificity of the tRNA from methionine to isoleucine. The sequence is that of tRNA(Ile)-lysidine synthase from Shouchella clausii (strain KSM-K16) (Alkalihalobacillus clausii).